The sequence spans 119 residues: Small ribosomal subunit protein uS13 (119 aa).

Residues 94-119 (GLPVRGQRTQTNARTRKGPRRGPAGK) form a disordered region.

It belongs to the universal ribosomal protein uS13 family. In terms of assembly, part of the 30S ribosomal subunit. Forms a loose heterodimer with protein S19. Forms two bridges to the 50S subunit in the 70S ribosome.

Its function is as follows. Located at the top of the head of the 30S subunit, it contacts several helices of the 16S rRNA. In the 70S ribosome it contacts the 23S rRNA (bridge B1a) and protein L5 of the 50S subunit (bridge B1b), connecting the 2 subunits; these bridges are implicated in subunit movement. Contacts the tRNAs in the A and P-sites. This Alkalilimnicola ehrlichii (strain ATCC BAA-1101 / DSM 17681 / MLHE-1) protein is Small ribosomal subunit protein uS13.